Reading from the N-terminus, the 147-residue chain is Large ribosomal subunit protein mL40 (147 aa).

Residues M1 to N26 constitute a mitochondrion transit peptide.

It belongs to the mitochondrion-specific ribosomal protein mL40 family. In terms of assembly, component of the mitochondrial large ribosomal subunit (mt-LSU). Mature yeast 74S mitochondrial ribosomes consist of a small (37S) and a large (54S) subunit. The 37S small subunit contains a 15S ribosomal RNA (15S mt-rRNA) and 34 different proteins. The 54S large subunit contains a 21S rRNA (21S mt-rRNA) and 46 different proteins.

It localises to the mitochondrion. In terms of biological role, component of the mitochondrial ribosome (mitoribosome), a dedicated translation machinery responsible for the synthesis of mitochondrial genome-encoded proteins, including at least some of the essential transmembrane subunits of the mitochondrial respiratory chain. The mitoribosomes are attached to the mitochondrial inner membrane and translation products are cotranslationally integrated into the membrane. This is Large ribosomal subunit protein mL40 (MRPL28) from Saccharomyces cerevisiae (strain ATCC 204508 / S288c) (Baker's yeast).